We begin with the raw amino-acid sequence, 255 residues long: 3-deoxy-manno-octulosonate cytidylyltransferase (255 aa).

It belongs to the KdsB family.

The protein localises to the cytoplasm. The catalysed reaction is 3-deoxy-alpha-D-manno-oct-2-ulosonate + CTP = CMP-3-deoxy-beta-D-manno-octulosonate + diphosphate. The protein operates within nucleotide-sugar biosynthesis; CMP-3-deoxy-D-manno-octulosonate biosynthesis; CMP-3-deoxy-D-manno-octulosonate from 3-deoxy-D-manno-octulosonate and CTP: step 1/1. It participates in bacterial outer membrane biogenesis; lipopolysaccharide biosynthesis. Activates KDO (a required 8-carbon sugar) for incorporation into bacterial lipopolysaccharide in Gram-negative bacteria. The protein is 3-deoxy-manno-octulosonate cytidylyltransferase of Thermodesulfovibrio yellowstonii (strain ATCC 51303 / DSM 11347 / YP87).